The following is a 213-amino-acid chain: Uridine kinase (213 aa).

Residue 15 to 22 (GASASGKS) coordinates ATP.

It belongs to the uridine kinase family.

The protein localises to the cytoplasm. It carries out the reaction uridine + ATP = UMP + ADP + H(+). The catalysed reaction is cytidine + ATP = CMP + ADP + H(+). The protein operates within pyrimidine metabolism; CTP biosynthesis via salvage pathway; CTP from cytidine: step 1/3. It participates in pyrimidine metabolism; UMP biosynthesis via salvage pathway; UMP from uridine: step 1/1. The protein is Uridine kinase of Sodalis glossinidius (strain morsitans).